The sequence spans 663 residues: Beta-galactosidase BgaH (663 aa).

Position 103 (Arg-103) interacts with substrate. Zn(2+) is bound at residue Cys-107. Substrate is bound at residue Asn-141. Residue Glu-142 is the Proton donor of the active site. Residues Cys-151, Cys-153, and Cys-156 each contribute to the Zn(2+) site. Glu-311 (nucleophile) is an active-site residue. Substrate is bound by residues Trp-319 and 359–362; that span reads EQYH.

The protein belongs to the glycosyl hydrolase 42 family. Homodimer.

It catalyses the reaction Hydrolysis of terminal non-reducing beta-D-galactose residues in beta-D-galactosides.. Its activity is regulated as follows. Requires 4 M NaCl for maximal activity. Loss of activity if DTT or beta-mercaptoethanol is omitted from buffers. Addition of 5-20 mM EDTA, 1 mM Cu(2+) or 1 mM Zn(2+) results in loss of activity. Functionally, when overexpressed, cleaves several different substrates including o-nitrophenyl-beta-D-galactopyranoside (ONPG), chromogen 5-bromo-4-chloro-3-indolyl-beta-D-galactopyranoside (X-Gal) and lactulose, but not lactose. Also has beta-D-fucosidase activity. No beta-L-fucosidase, beta-glucosidase, beta-arabinosidase or beta-xylosidase activity. The sequence is that of Beta-galactosidase BgaH from Haloferax lucentense (strain DSM 14919 / JCM 9276 / NCIMB 13854 / Aa 2.2) (Haloferax alicantei).